We begin with the raw amino-acid sequence, 701 residues long: Polyribonucleotide nucleotidyltransferase (701 aa).

Mg(2+)-binding residues include D487 and D493. The 60-residue stretch at 554 to 613 (PTMIAMKIDTDKIRDVIGKGGATIRAICEETKASIDIEDDGSIKIFGETKEAAEAARQRV) folds into the KH domain. The 69-residue stretch at 623-691 (GKIYVGKVER…NRGRIKLSIK (69 aa)) folds into the S1 motif domain.

Belongs to the polyribonucleotide nucleotidyltransferase family. In terms of assembly, component of the RNA degradosome, which is a multiprotein complex involved in RNA processing and mRNA degradation. Mg(2+) serves as cofactor.

It localises to the cytoplasm. It catalyses the reaction RNA(n+1) + phosphate = RNA(n) + a ribonucleoside 5'-diphosphate. Its function is as follows. Involved in mRNA degradation. Catalyzes the phosphorolysis of single-stranded polyribonucleotides processively in the 3'- to 5'-direction. The chain is Polyribonucleotide nucleotidyltransferase from Pseudomonas putida (strain W619).